A 362-amino-acid chain; its full sequence is Putative G-protein coupled receptor B0244.5 (362 aa).

Residues 1–47 are Extracellular-facing; sequence MQNIFENCSYHSKYEPYFLNCTNTTNQCVLIQDVGIIQAIDFWANLC. Residues asparagine 7, asparagine 20, and asparagine 23 are each glycosylated (N-linked (GlcNAc...) asparagine). Residues 48–68 traverse the membrane as a helical segment; it reads IPFTLFVIAFILNGYYLSILI. At 69–81 the chain is on the cytoplasmic side; the sequence is PEFRKMNDTTKKQ. The helical transmembrane segment at 82–102 threads the bilayer; the sequence is YIFVVSRGISSLSASSIMMVL. Residues 103 to 125 are Extracellular-facing; sequence RLLKMLSTSFTVYFLFFLIDDLS. A helical transmembrane segment spans residues 126–145; that stretch reads FYSLLGSYVGSTLLLYLATV. Residues 146–161 are Cytoplasmic-facing; that stretch reads RPIFYSIQISVRIVYK. Residues 162 to 182 form a helical membrane-spanning segment; that stretch reads FALVNVLLAVVLAVTTAIFQA. The Extracellular portion of the chain corresponds to 183–204; sequence AEVSDGFFHCDVQHCQPIINIA. The chain crosses the membrane as a helical span at residues 205–225; that stretch reads MFVIIATSFLIPIITLTFVLV. The Cytoplasmic segment spans residues 226 to 255; that stretch reads TLCFQKSRTQSIGNFTVDNSVYKSARTRLA. The helical transmembrane segment at 256–276 threads the bilayer; it reads WTLFTFTLISLTEMIPSSFLV. The Extracellular portion of the chain corresponds to 277 to 295; it reads NLRVEDTITICVNFYQADH. The chain crosses the membrane as a helical span at residues 296–316; it reads LFIPAIMNSFQTLAWGIALIV. Residues 317 to 362 are Cytoplasmic-facing; the sequence is DPLCALLFDPRIRKVWVEHVSRLSIIIGRSFEACCHSNLNKEIQDK.

This sequence belongs to the G-protein coupled receptor 1 family. B0244 subfamily.

The protein resides in the cell membrane. The protein is Putative G-protein coupled receptor B0244.5 of Caenorhabditis elegans.